The chain runs to 520 residues: Eukaryotic translation initiation factor 3 subunit L (520 aa).

The PCI domain occupies 278–478; the sequence is FATYYYVGIC…ELDIALENDL (201 aa).

It belongs to the eIF-3 subunit L family. As to quaternary structure, component of the eukaryotic translation initiation factor 3 (eIF-3) complex.

Its subcellular location is the cytoplasm. Component of the eukaryotic translation initiation factor 3 (eIF-3) complex, which is involved in protein synthesis of a specialized repertoire of mRNAs and, together with other initiation factors, stimulates binding of mRNA and methionyl-tRNAi to the 40S ribosome. The eIF-3 complex specifically targets and initiates translation of a subset of mRNAs involved in cell proliferation. The sequence is that of Eukaryotic translation initiation factor 3 subunit L from Yarrowia lipolytica (strain CLIB 122 / E 150) (Yeast).